We begin with the raw amino-acid sequence, 336 residues long: Holliday junction branch migration complex subunit RuvB (336 aa).

A large ATPase domain (RuvB-L) region spans residues 1–181 (MDRIVEIEKF…FGMQFRLEFY (181 aa)). ATP contacts are provided by residues leucine 20, arginine 21, glycine 62, lysine 65, threonine 66, threonine 67, 128–130 (EDF), arginine 171, tyrosine 181, and arginine 218. Threonine 66 contacts Mg(2+). Positions 182–252 (KNEELAIILE…RAKEALDSLG (71 aa)) are small ATPAse domain (RuvB-S). Residues 255-336 (ELGFDAMDLR…KYNKGLFDEK (82 aa)) form a head domain (RuvB-H) region. DNA-binding residues include arginine 309 and arginine 314.

It belongs to the RuvB family. Homohexamer. Forms an RuvA(8)-RuvB(12)-Holliday junction (HJ) complex. HJ DNA is sandwiched between 2 RuvA tetramers; dsDNA enters through RuvA and exits via RuvB. An RuvB hexamer assembles on each DNA strand where it exits the tetramer. Each RuvB hexamer is contacted by two RuvA subunits (via domain III) on 2 adjacent RuvB subunits; this complex drives branch migration. In the full resolvosome a probable DNA-RuvA(4)-RuvB(12)-RuvC(2) complex forms which resolves the HJ.

It is found in the cytoplasm. It catalyses the reaction ATP + H2O = ADP + phosphate + H(+). In terms of biological role, the RuvA-RuvB-RuvC complex processes Holliday junction (HJ) DNA during genetic recombination and DNA repair, while the RuvA-RuvB complex plays an important role in the rescue of blocked DNA replication forks via replication fork reversal (RFR). RuvA specifically binds to HJ cruciform DNA, conferring on it an open structure. The RuvB hexamer acts as an ATP-dependent pump, pulling dsDNA into and through the RuvAB complex. RuvB forms 2 homohexamers on either side of HJ DNA bound by 1 or 2 RuvA tetramers; 4 subunits per hexamer contact DNA at a time. Coordinated motions by a converter formed by DNA-disengaged RuvB subunits stimulates ATP hydrolysis and nucleotide exchange. Immobilization of the converter enables RuvB to convert the ATP-contained energy into a lever motion, pulling 2 nucleotides of DNA out of the RuvA tetramer per ATP hydrolyzed, thus driving DNA branch migration. The RuvB motors rotate together with the DNA substrate, which together with the progressing nucleotide cycle form the mechanistic basis for DNA recombination by continuous HJ branch migration. Branch migration allows RuvC to scan DNA until it finds its consensus sequence, where it cleaves and resolves cruciform DNA. The polypeptide is Holliday junction branch migration complex subunit RuvB (Campylobacter lari (strain RM2100 / D67 / ATCC BAA-1060)).